A 93-amino-acid chain; its full sequence is Auxin-responsive protein SAUR26 (93 aa).

It belongs to the ARG7 family. Interacts with PP2C-D1. As to expression, higher expression in thermo-responsive cultivars (e.g. cv. Alst-1, cv. Ang-0 and cv. Com-0) than in low thermo-responsive cultivars (e.g. cv. Dja-1, cv. El-0 and cv. Kon).

Its subcellular location is the cell membrane. Provide a mechanistic link between auxin and plasma membrane H(+)-ATPases (PM H(+)-ATPases, e.g. AHA1 and AHA2), and triggers PM H(+)-ATPases activity by promoting phosphorylation of their C-terminal autoinhibitory domain as a result of PP2C-D subfamily of type 2C phosphatases inhibition, thus leading to the acidification of the apoplast and the facilitation of solutes and water uptake to drive cell expansion. Functions as a positive effectors of cell expansion through modulation of auxin transport. Involved in thermo-responsiveness of plant architecture. Enhances plasma membrane H(+)-ATPase. Probably involved in light intensity mediated root development. This Arabidopsis thaliana (Mouse-ear cress) protein is Auxin-responsive protein SAUR26.